The sequence spans 191 residues: Leucyl/phenylalanyl-tRNA--protein transferase (191 aa).

Belongs to the L/F-transferase family.

The protein resides in the cytoplasm. It carries out the reaction N-terminal L-lysyl-[protein] + L-leucyl-tRNA(Leu) = N-terminal L-leucyl-L-lysyl-[protein] + tRNA(Leu) + H(+). It catalyses the reaction N-terminal L-arginyl-[protein] + L-leucyl-tRNA(Leu) = N-terminal L-leucyl-L-arginyl-[protein] + tRNA(Leu) + H(+). The enzyme catalyses L-phenylalanyl-tRNA(Phe) + an N-terminal L-alpha-aminoacyl-[protein] = an N-terminal L-phenylalanyl-L-alpha-aminoacyl-[protein] + tRNA(Phe). Functionally, functions in the N-end rule pathway of protein degradation where it conjugates Leu, Phe and, less efficiently, Met from aminoacyl-tRNAs to the N-termini of proteins containing an N-terminal arginine or lysine. This Rubrobacter xylanophilus (strain DSM 9941 / JCM 11954 / NBRC 16129 / PRD-1) protein is Leucyl/phenylalanyl-tRNA--protein transferase.